We begin with the raw amino-acid sequence, 309 residues long: Lipoyl synthase (309 aa).

[4Fe-4S] cluster-binding residues include C37, C42, C48, C67, C71, C74, and S281. The 218-residue stretch at 53–270 (DGPGTATFML…RVAETEFGFL (218 aa)) folds into the Radical SAM core domain.

This sequence belongs to the radical SAM superfamily. Lipoyl synthase family. It depends on [4Fe-4S] cluster as a cofactor.

It localises to the cytoplasm. The catalysed reaction is [[Fe-S] cluster scaffold protein carrying a second [4Fe-4S](2+) cluster] + N(6)-octanoyl-L-lysyl-[protein] + 2 oxidized [2Fe-2S]-[ferredoxin] + 2 S-adenosyl-L-methionine + 4 H(+) = [[Fe-S] cluster scaffold protein] + N(6)-[(R)-dihydrolipoyl]-L-lysyl-[protein] + 4 Fe(3+) + 2 hydrogen sulfide + 2 5'-deoxyadenosine + 2 L-methionine + 2 reduced [2Fe-2S]-[ferredoxin]. The protein operates within protein modification; protein lipoylation via endogenous pathway; protein N(6)-(lipoyl)lysine from octanoyl-[acyl-carrier-protein]: step 2/2. Catalyzes the radical-mediated insertion of two sulfur atoms into the C-6 and C-8 positions of the octanoyl moiety bound to the lipoyl domains of lipoate-dependent enzymes, thereby converting the octanoylated domains into lipoylated derivatives. This Natronomonas pharaonis (strain ATCC 35678 / DSM 2160 / CIP 103997 / JCM 8858 / NBRC 14720 / NCIMB 2260 / Gabara) (Halobacterium pharaonis) protein is Lipoyl synthase.